A 292-amino-acid polypeptide reads, in one-letter code: Techylectin-5A (292 aa).

A signal peptide spans 1–23; the sequence is MHNLRNILFVITLIGQKYGLTSS. Position 24 is a pyrrolidone carboxylic acid (Q24). Positions 63–286 constitute a Fibrinogen C-terminal domain; sequence PIVSPDPTDC…QVEMKIRPVE (224 aa). C72 and C103 are joined by a disulfide. 3 N-linked (GlcNAc...) asparagine glycosylation sites follow: N173, N198, and N214. D221, H225, and T227 together coordinate Ca(2+). C229 and C242 form a disulfide bridge.

In terms of assembly, multimeric. PubMed:10468566 and PubMed:11707569 are in disagreement about the nature of the multimer, PubMed:10468566 finds hexamers and octamers, the results in PubMed:11707569 suggest tetramers. Strongly expressed in heart and intestine, weakly expressed in hepatopancreas. Not found in hemocytes, stomach, nervous tissue or skeletal muscle.

It localises to the secreted. In terms of biological role, lectin involved in innate immunity. Agglutinates all types of human erythrocytes, Gram-positive and Gram-negative bacteria. Has a stronger agglutinating activity towards Gram-negative bacteria than towards Gram-positive bacteria. Specifically recognizes acetyl group-containing substances on agglutinated cells. The hemagglutinating activity was inhibited by EDTA, acetyl group-containing mono- and disaccharides, N-acetyl derivatives of amino acids, other acetyl group-containing substances, propionamide and benzamide. Enhances the antimicrobial activity of big defensin against Gram-positive bacteria but not against Gram-negative bacteria. This is Techylectin-5A from Tachypleus tridentatus (Japanese horseshoe crab).